The following is a 609-amino-acid chain: Chaperone protein DnaK (609 aa).

T173 carries the phosphothreonine; by autocatalysis modification. Residues 525–542 (ENISDEDKKNAEEKKDAL) show a composition bias toward basic and acidic residues. Disordered regions lie at residues 525 to 554 (ENIS…IDDI) and 574 to 609 (EQAQ…EDKK). The span at 574 to 587 (EQAQQAQQQGQEEQ) shows a compositional bias: low complexity. Residues 597-609 (ADFKEVKDDEDKK) are compositionally biased toward basic and acidic residues.

Belongs to the heat shock protein 70 family.

In terms of biological role, acts as a chaperone. The sequence is that of Chaperone protein DnaK from Staphylococcus epidermidis (strain ATCC 35984 / DSM 28319 / BCRC 17069 / CCUG 31568 / BM 3577 / RP62A).